Consider the following 61-residue polypeptide: Alpha-conotoxin-like PnMGMR-02 (61 aa).

The first 21 residues, 1 to 21, serve as a signal peptide directing secretion; sequence MGMRMMFTVFLLVVLATTVVS. The propeptide occupies 22–44; the sequence is FTSDRASDGGNAAASDLIALTIK. 2 cysteine pairs are disulfide-bonded: Cys46–Cys52 and Cys47–Cys60. The ser-Xaa-Pro motif, crucial for potent interaction with nAChR stretch occupies residues 48-50; the sequence is SRP. Cys60 carries the post-translational modification Cysteine amide.

Belongs to the conotoxin A superfamily. Expressed by the venom duct.

It localises to the secreted. Functionally, alpha-conotoxins act on postsynaptic membranes, they bind to the nicotinic acetylcholine receptors (nAChR) and thus inhibit them. This toxin blocks mammalian nAChRs (alpha-7 &gt; alpha-3/beta-2). This is Alpha-conotoxin-like PnMGMR-02 from Conus pennaceus (Feathered cone).